A 642-amino-acid chain; its full sequence is Threonine--tRNA ligase (642 aa).

The region spanning 1-61 (MPVITLPDGS…ENDATLAIIT (61 aa)) is the TGS domain. The tract at residues 243–534 (DHRKIGKQLD…LTEEFAGFFP (292 aa)) is catalytic. Zn(2+)-binding residues include Cys-334, His-385, and His-511.

This sequence belongs to the class-II aminoacyl-tRNA synthetase family. As to quaternary structure, homodimer. Zn(2+) serves as cofactor.

It is found in the cytoplasm. The catalysed reaction is tRNA(Thr) + L-threonine + ATP = L-threonyl-tRNA(Thr) + AMP + diphosphate + H(+). Catalyzes the attachment of threonine to tRNA(Thr) in a two-step reaction: L-threonine is first activated by ATP to form Thr-AMP and then transferred to the acceptor end of tRNA(Thr). Also edits incorrectly charged L-seryl-tRNA(Thr). This chain is Threonine--tRNA ligase, found in Salmonella dublin (strain CT_02021853).